A 714-amino-acid polypeptide reads, in one-letter code: MTAIKKTITYGQHELTLETGEIARQADGAVMVSYGDTVVLVSVVGKREVKEGQDFFPLTVDYQEKTYAAGKIPGGFFKREGRPSEKETLTSRLIDRPLRPLFPEAFYNEVQVVATVMSSDPEIDADIPAIIGASAALAISGIPFYGPIGAARVGYINGEYVLNPTASQLKETALDLVVAATESAVLMVESEAKELPEDVMLGSVVYGHEQMQIVISAINELAAEVGKEPWDWAPPEPNTELIAKVEALAGADINEAYKIKSKSARSSKLDEIRSRVLGELITETTSTSEANEIKSIFHNLEAKVVRSQILNGEPRIDGRDTRTVRPISIRTGVLPRTHGSALFTRGETQALVVATLGTGRDEQIIDALQGEYADRFMLHYNMPPYATGETGRVGTPKRREIGHGRLAKRALLAVLPSQEEFGYTIRVVSEITESNGSSSMASVCGGCLSLLDAGVPLKAHVAGIAMGLIKEGNRVAVLTDILGDEDHLGDMDFKVAGTESGITALQMDIKITGITAEIMRVALSQAKEGRLHILGLMKEAVGEQPQELSEFAPRIITMKINPEKIRDVIGKGGAVIRALTEETGTTIDIEEDGTIKIGCTSAEAGEEAKKRIEAITAEVEVGQVYDGTVLKLLDFGAIVSLLPGKDGLLHISQIAHQRVNAVADFLKEGQVVKVKVLEVDDKGRVRLSAKALIEAPSAEAPEEPAVAATGADQQ.

Residues Asp486 and Asp492 each coordinate Mg(2+). Positions 553-612 (PRIITMKINPEKIRDVIGKGGAVIRALTEETGTTIDIEEDGTIKIGCTSAEAGEEAKKRI) constitute a KH domain. Residues 622-690 (GQVYDGTVLK…DKGRVRLSAK (69 aa)) enclose the S1 motif domain.

This sequence belongs to the polyribonucleotide nucleotidyltransferase family. It depends on Mg(2+) as a cofactor.

It is found in the cytoplasm. It carries out the reaction RNA(n+1) + phosphate = RNA(n) + a ribonucleoside 5'-diphosphate. Involved in mRNA degradation. Catalyzes the phosphorolysis of single-stranded polyribonucleotides processively in the 3'- to 5'-direction. The chain is Polyribonucleotide nucleotidyltransferase from Methylobacillus flagellatus (strain ATCC 51484 / DSM 6875 / VKM B-1610 / KT).